A 381-amino-acid polypeptide reads, in one-letter code: Alkanesulfonate monooxygenase (381 aa).

It belongs to the SsuD family. As to quaternary structure, homotetramer.

The catalysed reaction is an alkanesulfonate + FMNH2 + O2 = an aldehyde + FMN + sulfite + H2O + 2 H(+). Functionally, catalyzes the desulfonation of aliphatic sulfonates. The sequence is that of Alkanesulfonate monooxygenase from Escherichia coli O8 (strain IAI1).